A 1577-amino-acid polypeptide reads, in one-letter code: Dynamin-binding protein (1577 aa).

N-acetylmethionine is present on M1. SH3 domains are found at residues 2–61 (EAGS…IVTI), 66–126 (EGER…ELCL), 145–204 (YSMG…LLGP), and 243–302 (EPGT…LCPD). Disordered regions lie at residues 211–244 (SVSS…EEEP) and 335–395 (EEQR…WEMP). The segment covering 230 to 244 (VGEEEIGPDEDEEEP) has biased composition (acidic residues). Residues 335–344 (EEQRHETSDH) are compositionally biased toward basic and acidic residues. S496 carries the phosphoserine modification. Disordered stretches follow at residues 591–624 (GSSK…TSPH) and 639–659 (VRPS…NAVS). Residues 639 to 649 (VRPSRPAPLPP) show a composition bias toward pro residues. Residue S684 is modified to Phosphoserine. Residues 693–757 (LVLVRIEEME…ELQQLREMTL (65 aa)) are a coiled coil. The DH domain occupies 784–967 (KRAKVIEELL…KEINVNINEY (184 aa)). Residues 1008–1217 (LKHLTGFAPQ…LKVAGREGNL (210 aa)) form the BAR domain. Positions 1136 to 1173 (ERAEKLKDKKTLEELQSARNNYEALNAQLLDELPKFHQ) form a coiled coil. Residues 1285-1348 (PPEKLFQAER…YSSFLKPYNP (64 aa)) enclose the SH3 5 domain. A disordered region spans residues 1348 to 1487 (PRRSHSDASV…SVPGRNGQSQ (140 aa)). Positions 1376 to 1405 (RQNSGSTLTFNPSSMAVSFTSGSCQKQPQD) are enriched in polar residues. Residues 1419–1442 (SASLNPSNSESSPSRCPSDPDSTS) show a composition bias toward low complexity. An SH3 6 domain is found at 1513–1576 (EGNQVYFAVY…PSNYIRKTEY (64 aa)).

In terms of assembly, binds DNM1 via its N-terminal SH3 domains. The C-terminal SH3 domain binds a complex containing actin, tubulin, Hsp70 and actin-regulatory proteins, such as ENAH, EVL, WIRE, CR16, WAVE1 and NAP1L1. Interacts with FASLG. Interacts (via SH3 domain 6) with WASL. Interacts (via SH3 domain 6) interacts with ENAH. Interacts (via C-terminal domain) with TJP1; required for the apical cell-cell junction localization of DNMBP. As to quaternary structure, (Microbial infection) Interacts (via SH3 domain 6) with L.monocytogenes InlC. Detected in heart, brain, lung, liver, skeletal muscle, kidney and pancreas.

It is found in the cytoplasm. It localises to the golgi apparatus. The protein resides in the golgi stack. Its subcellular location is the cytoskeleton. The protein localises to the synapse. It is found in the cell junction. Plays a critical role as a guanine nucleotide exchange factor (GEF) for CDC42 in several intracellular processes associated with the actin and microtubule cytoskeleton. Regulates the structure of apical junctions through F-actin organization in epithelial cells. Participates in the normal lumenogenesis of epithelial cell cysts by regulating spindle orientation. Plays a role in ciliogenesis. May play a role in membrane trafficking between the cell surface and the Golgi. In Homo sapiens (Human), this protein is Dynamin-binding protein.